A 151-amino-acid chain; its full sequence is Large ribosomal subunit protein bL9 (151 aa).

It belongs to the bacterial ribosomal protein bL9 family.

Binds to the 23S rRNA. This chain is Large ribosomal subunit protein bL9, found in Prochlorococcus marinus (strain AS9601).